A 72-amino-acid polypeptide reads, in one-letter code: Large ribosomal subunit protein eL40 (72 aa).

It belongs to the eukaryotic ribosomal protein eL40 family.

This chain is Large ribosomal subunit protein eL40, found in Nicotiana tabacum (Common tobacco).